The following is a 421-amino-acid chain: Gamma-glutamyl phosphate reductase (421 aa).

It belongs to the gamma-glutamyl phosphate reductase family.

The protein resides in the cytoplasm. It catalyses the reaction L-glutamate 5-semialdehyde + phosphate + NADP(+) = L-glutamyl 5-phosphate + NADPH + H(+). It participates in amino-acid biosynthesis; L-proline biosynthesis; L-glutamate 5-semialdehyde from L-glutamate: step 2/2. Its function is as follows. Catalyzes the NADPH-dependent reduction of L-glutamate 5-phosphate into L-glutamate 5-semialdehyde and phosphate. The product spontaneously undergoes cyclization to form 1-pyrroline-5-carboxylate. The polypeptide is Gamma-glutamyl phosphate reductase (Pseudomonas aeruginosa (strain ATCC 15692 / DSM 22644 / CIP 104116 / JCM 14847 / LMG 12228 / 1C / PRS 101 / PAO1)).